Here is a 480-residue protein sequence, read N- to C-terminus: Alpha,alpha-trehalose-phosphate synthase [UDP-forming] 2 (480 aa).

Positions 97 and 151 each coordinate D-glucose 6-phosphate. UDP-binding residues include Arg288 and Lys293. UDP-alpha-D-glucose contacts are provided by Arg288 and Lys293. Position 326 (Arg326) interacts with D-glucose 6-phosphate. 387–395 serves as a coordination point for UDP-alpha-D-glucose; that stretch reads DGMNLVSFE. A UDP-binding site is contributed by 391 to 395; sequence LVSFE.

This sequence belongs to the glycosyltransferase 20 family.

It catalyses the reaction D-glucose 6-phosphate + UDP-alpha-D-glucose = alpha,alpha-trehalose 6-phosphate + UDP + H(+). It functions in the pathway carbohydrate biosynthesis. Synthase catalytic subunit of the trehalose synthase complex that catalyzes the production of trehalose from glucose-6-phosphate and UDP-alpha-D-glucose in a two step process. The sequence is that of Alpha,alpha-trehalose-phosphate synthase [UDP-forming] 2 from Aspergillus niger.